A 304-amino-acid chain; its full sequence is Bifunctional phosphoglucose/phosphomannose isomerase (304 aa).

The SIS domain occupies 16 to 147 (FDKSFKVGKY…KPKIGDVDEA (132 aa)). Residues G35, S36, S74, S76, T79, and R122 each contribute to the D-fructose 6-phosphate site. Catalysis depends on E196, which acts as the Proton acceptor. 2 residues coordinate D-fructose 6-phosphate: H212 and K300. Residue H212 is the Proton donor of the active site. Residue K300 is the Proton acceptor of the active site.

It belongs to the PGI/PMI family. In terms of assembly, homodimer.

It catalyses the reaction alpha-D-glucose 6-phosphate = beta-D-fructose 6-phosphate. The catalysed reaction is D-mannose 6-phosphate = D-fructose 6-phosphate. Its function is as follows. Dual specificity isomerase that catalyzes the isomerization of both glucose-6-phosphate and mannose-6-phosphate to fructose-6-phosphate. The sequence is that of Bifunctional phosphoglucose/phosphomannose isomerase from Thermoplasma volcanium (strain ATCC 51530 / DSM 4299 / JCM 9571 / NBRC 15438 / GSS1).